The primary structure comprises 128 residues: U24-ctenitoxin-Pn1a (128 aa).

Thyroglobulin type-1 domains follow at residues 4 to 67 (KSDC…ECGC) and 72 to 127 (KERK…SLKC). 4 disulfide bridges follow: cysteine 7–cysteine 27, cysteine 38–cysteine 45, cysteine 47–cysteine 67, and cysteine 107–cysteine 127.

Expressed by the venom gland.

It is found in the secreted. Functionally, cysteine proteinase inhibitor. This chain is U24-ctenitoxin-Pn1a, found in Phoneutria nigriventer (Brazilian armed spider).